The sequence spans 436 residues: Trigger factor (436 aa).

Residues 161-246 enclose the PPIase FKBP-type domain; that stretch reads GDQVIVDFDG…VREVKEPTLP (86 aa).

This sequence belongs to the FKBP-type PPIase family. Tig subfamily.

The protein resides in the cytoplasm. The catalysed reaction is [protein]-peptidylproline (omega=180) = [protein]-peptidylproline (omega=0). Its function is as follows. Involved in protein export. Acts as a chaperone by maintaining the newly synthesized protein in an open conformation. Functions as a peptidyl-prolyl cis-trans isomerase. In Thioalkalivibrio sulfidiphilus (strain HL-EbGR7), this protein is Trigger factor.